Here is a 183-residue protein sequence, read N- to C-terminus: Endoribonuclease YbeY (183 aa).

Positions 143, 147, and 153 each coordinate Zn(2+).

Belongs to the endoribonuclease YbeY family. The cofactor is Zn(2+).

The protein resides in the cytoplasm. Its function is as follows. Single strand-specific metallo-endoribonuclease involved in late-stage 70S ribosome quality control and in maturation of the 3' terminus of the 16S rRNA. The polypeptide is Endoribonuclease YbeY (Rickettsia bellii (strain RML369-C)).